The chain runs to 269 residues: Ice-binding protein (269 aa).

A signal peptide spans 1–24 (MLKINRKYAIILAIVAFSSFQTEA). 7 consecutive short sequence motifs (probable ice-binding motif (T/S-X-T)) follow at residues 45–47 (TVT), 65–67 (SAT), 128–130 (SAQ), 154–156 (TLT), 180–182 (SAT), 198–200 (SIT), and 218–220 (AVT). A PEP C-terminal anchor region spans residues 240 to 263 (VPEPDSSLAVLGSGLVSLLFAFRK). The chain crosses the membrane as a helical span at residues 245 to 261 (SSLAVLGSGLVSLLFAF).

The protein belongs to the ice-binding protein family.

It is found in the cell outer membrane. A probable ice-binding protein that has ice-structuring activities in vitro. Thought not to anchor the cyanobacterium to ice surfaces, as its habitat is shallow puddles fed by glacier meltwater. This Nostoc sp. (strain HG1) protein is Ice-binding protein.